Reading from the N-terminus, the 550-residue chain is Phospholipase B-like 1 (550 aa).

An N-terminal signal peptide occupies residues 1 to 39; the sequence is MCHRSHGRSLRPPSPLLLLLPLLLQSPWAAGAAEKHNSA. N-linked (GlcNAc...) (high mannose) asparagine; alternate glycosylation occurs at Asn72. A glycan (N-linked (GlcNAc...) (hybrid) asparagine; alternate) is linked at Asn72. The propeptide at 210 to 228 is removed in mature form; it reads LSPTKSSSLKKFKIWEMGH. Asn309 and Asn412 each carry an N-linked (GlcNAc...) (high mannose) asparagine; alternate glycan. N-linked (GlcNAc...) (hybrid) asparagine; alternate glycans are attached at residues Asn309 and Asn412. 2 disulfides stabilise this stretch: Cys471/Cys476 and Cys475/Cys490. N-linked (GlcNAc...) (high mannose) asparagine; alternate glycosylation occurs at Asn527. N-linked (GlcNAc...) (hybrid) asparagine; alternate glycosylation occurs at Asn527.

It belongs to the phospholipase B-like family. As to quaternary structure, may form a homodimer, each monomer is composed of a chain A and a chain B. Post-translationally, the maturation cleavages that produces chains A and B are required to open the putative substrate binding pocket. Both chains A and B remain associated in the mature protein.

It is found in the lysosome. Exhibits weak phospholipase activity, acting on various phospholipids, including phosphatidylcholine, phosphatidylinositol, phosphatidylethanolamine and lysophospholipids. However, in view of the small size of the putative binding pocket, it has been proposed that it may act rather as an amidase or a peptidase. This is Phospholipase B-like 1 (Plbd1) from Rattus norvegicus (Rat).